Consider the following 310-residue polypeptide: Tyrosine recombinase XerC (310 aa).

The region spanning asparagine 11–valine 97 is the Core-binding (CB) domain. Residues proline 118–aspartate 298 form the Tyr recombinase domain. Active-site residues include arginine 157, lysine 181, histidine 250, arginine 253, and histidine 276. Residue tyrosine 285 is the O-(3'-phospho-DNA)-tyrosine intermediate of the active site.

This sequence belongs to the 'phage' integrase family. XerC subfamily. In terms of assembly, forms a cyclic heterotetrameric complex composed of two molecules of XerC and two molecules of XerD.

Its subcellular location is the cytoplasm. Its function is as follows. Site-specific tyrosine recombinase, which acts by catalyzing the cutting and rejoining of the recombining DNA molecules. The XerC-XerD complex is essential to convert dimers of the bacterial chromosome into monomers to permit their segregation at cell division. It also contributes to the segregational stability of plasmids. This is Tyrosine recombinase XerC from Vibrio atlanticus (strain LGP32) (Vibrio splendidus (strain Mel32)).